The primary structure comprises 215 residues: ER lumen protein-retaining receptor A (215 aa).

Over 1–2 the chain is Lumenal; sequence MN. The chain crosses the membrane as a helical span at residues 3–21; the sequence is IFRFAGDMSHLISVLILLL. Over 22–35 the chain is Cytoplasmic; that stretch reads KIYATKSCAGISLK. A helical membrane pass occupies residues 36–53; that stretch reads TQELYALVFLTRYLDLFT. Topologically, residues 54–61 are lumenal; that stretch reads DYVSLYNS. Residues 62 to 82 form a helical membrane-spanning segment; it reads IMKIVFIASSLAIVWCMRRHP. At 83–98 the chain is on the cytoplasmic side; it reads LVRRSYDKDLDTFRHQ. A helical transmembrane segment spans residues 99–112; sequence YVVLACFVLGLILN. The Lumenal portion of the chain corresponds to 113-119; that stretch reads EKFTVQE. A helical transmembrane segment spans residues 120–139; sequence VFWAFSIYLEAVAILPQLVL. Residues 140 to 151 lie on the Cytoplasmic side of the membrane; the sequence is LQRSGNVDNLTG. Residues 152–170 traverse the membrane as a helical segment; sequence QYVVFLGAYRGLYIINWIY. Over 171 to 181 the chain is Lumenal; sequence RYFTEDHFTRW. A helical membrane pass occupies residues 182–202; sequence IACVSGLVQTALYADFFYYYY. The Cytoplasmic portion of the chain corresponds to 203–215; the sequence is ISWKTNTKLKLPA.

It belongs to the ERD2 family.

It is found in the endoplasmic reticulum membrane. Required for the retention of luminal endoplasmic reticulum proteins. Determines the specificity of the luminal ER protein retention system. Also required for normal vesicular traffic through the Golgi. This receptor recognizes H-D-E-L. This is ER lumen protein-retaining receptor A (ERD2A) from Arabidopsis thaliana (Mouse-ear cress).